A 281-amino-acid chain; its full sequence is 18S rRNA (guanine-N(7))-methyltransferase (281 aa).

A disordered region spans residues 256 to 281 (KARRRRQGKEVCPDTQYTGRKRKPRF).

The protein belongs to the class I-like SAM-binding methyltransferase superfamily. BUD23/WBSCR22 family. Heterodimer with TRMT112; this heterodimerization is necessary for the metabolic stability and activity of the catalytic subunit BUD23. Interacts with GRIP1. In terms of processing, may be ubiquitinated and targeted to degradation in response to pro-inflammatory cytokine signaling.

It is found in the nucleus. The protein localises to the nucleoplasm. The protein resides in the cytoplasm. Its subcellular location is the perinuclear region. The enzyme catalyses a guanosine in 18S rRNA + S-adenosyl-L-methionine = an N(7)-methylguanosine in 18S rRNA + S-adenosyl-L-homocysteine. Functionally, S-adenosyl-L-methionine-dependent methyltransferase that specifically methylates the N(7) position of a guanine in 18S rRNA. Requires the methyltransferase adapter protein TRM112 for full rRNA methyltransferase activity. Involved in the pre-rRNA processing steps leading to small-subunit rRNA production independently of its RNA-modifying catalytic activity. Important for biogenesis end export of the 40S ribosomal subunit independent on its methyltransferase activity. Locus-specific steroid receptor coactivator. Potentiates transactivation by glucocorticoid (NR3C1), mineralocorticoid (NR3C2), androgen (AR) and progesterone (PGR) receptors. Required for the maintenance of open chromatin at the TSC22D3/GILZ locus to facilitate NR3C1 loading on the response elements. Required for maintenance of dimethylation on histone H3 'Lys-79' (H3K79me2), although direct histone methyltransferase activity is not observed in vitro. In Bos taurus (Bovine), this protein is 18S rRNA (guanine-N(7))-methyltransferase.